A 302-amino-acid chain; its full sequence is Deoxyhypusine hydroxylase (302 aa).

HEAT-like PBS-type repeat units follow at residues 23–49 (ERFR…AFDD), 54–80 (LKHE…VLKD), 87–113 (VRHE…YKKD), 175–201 (DRYR…GLKD), 206–232 (FRHE…NLED), and 239–265 (VRHE…YADD). The Fe cation site is built by His-56, Glu-57, His-89, and Glu-90. Residues His-208, Glu-209, His-241, and Glu-242 each contribute to the Fe cation site.

This sequence belongs to the deoxyhypusine hydroxylase family. It depends on Fe(2+) as a cofactor.

The protein resides in the endoplasmic reticulum membrane. The enzyme catalyses [eIF5A protein]-deoxyhypusine + AH2 + O2 = [eIF5A protein]-hypusine + A + H2O. It participates in protein modification; eIF5A hypusination. Functionally, catalyzes the hydroxylation of the N(6)-(4-aminobutyl)-L-lysine intermediate to form hypusine, an essential post-translational modification only found in mature eIF-5A factor. Essential for organismal viability and plays a role in a wide number of important processes such as cell growth and proliferation, and regulates induction of autophagy and protein synthesis. Has a role in eIF-5A-mediated translational control. In Drosophila pseudoobscura pseudoobscura (Fruit fly), this protein is Deoxyhypusine hydroxylase.